The primary structure comprises 293 residues: Protease HtpX (293 aa).

2 helical membrane-spanning segments follow: residues 4 to 24 (IALF…ILSL) and 32 to 52 (VMGL…VSLL). H139 contributes to the Zn(2+) binding site. E140 is an active-site residue. H143 contributes to the Zn(2+) binding site. The next 2 helical transmembrane spans lie at 158-178 (IVNT…AGFM) and 193-213 (MVYF…ASTI). Residue E222 participates in Zn(2+) binding.

Belongs to the peptidase M48B family. It depends on Zn(2+) as a cofactor.

It localises to the cell inner membrane. This is Protease HtpX from Erwinia tasmaniensis (strain DSM 17950 / CFBP 7177 / CIP 109463 / NCPPB 4357 / Et1/99).